The primary structure comprises 360 residues: Protein RecA (360 aa).

65–72 contacts ATP; the sequence is GPESSGKT.

Belongs to the RecA family.

Its subcellular location is the cytoplasm. Can catalyze the hydrolysis of ATP in the presence of single-stranded DNA, the ATP-dependent uptake of single-stranded DNA by duplex DNA, and the ATP-dependent hybridization of homologous single-stranded DNAs. It interacts with LexA causing its activation and leading to its autocatalytic cleavage. In Tolumonas auensis (strain DSM 9187 / NBRC 110442 / TA 4), this protein is Protein RecA.